Here is a 347-residue protein sequence, read N- to C-terminus: Protein RecA (347 aa).

68 to 75 (GPESSGKT) contributes to the ATP binding site.

This sequence belongs to the RecA family.

Its subcellular location is the cytoplasm. Can catalyze the hydrolysis of ATP in the presence of single-stranded DNA, the ATP-dependent uptake of single-stranded DNA by duplex DNA, and the ATP-dependent hybridization of homologous single-stranded DNAs. It interacts with LexA causing its activation and leading to its autocatalytic cleavage. The protein is Protein RecA of Mycobacterium sp. (strain JLS).